Reading from the N-terminus, the 396-residue chain is RNA binding protein fox-1 homolog 1 (396 aa).

A disordered region spans residues 1–119 (MNCEREQLRG…ESKSQPKRLH (119 aa)). Over residues 67-86 (PPTQTHSEQSADTSAQTVSG) the composition is skewed to polar residues. Positions 87-98 (TATQTDDAAPTD) are enriched in low complexity. A compositionally biased stretch (polar residues) spans 99–112 (GQPQTQPSENTESK). Residues 116-192 (KRLHVSNIPF…RKIEVNNATA (77 aa)) enclose the RRM domain. 2 positions are modified to asymmetric dimethylarginine: arginine 316 and alanine 337. An Omega-N-methylarginine modification is found at arginine 387.

As to quaternary structure, binds to the C-terminus of ATXN2. Detected in brain (at protein level). Detected in heart, brain, neurons, skeletal muscle and embryo.

The protein localises to the nucleus. It is found in the cytoplasm. Functionally, RNA-binding protein that regulates alternative splicing events by binding to 5'-UGCAUGU-3' elements. Prevents binding of U2AF2 to the 3'-splice site. Regulates alternative splicing of tissue-specific exons and of differentially spliced exons during erythropoiesis. The chain is RNA binding protein fox-1 homolog 1 (Rbfox1) from Mus musculus (Mouse).